Consider the following 172-residue polypeptide: Ribosome maturation factor RimM (172 aa).

The region spanning 96–168 is the PRC barrel domain; that stretch reads EGEFYYHEII…RVDVEIPEGL (73 aa).

It belongs to the RimM family. In terms of assembly, binds ribosomal protein uS19.

The protein resides in the cytoplasm. Functionally, an accessory protein needed during the final step in the assembly of 30S ribosomal subunit, possibly for assembly of the head region. Essential for efficient processing of 16S rRNA. May be needed both before and after RbfA during the maturation of 16S rRNA. It has affinity for free ribosomal 30S subunits but not for 70S ribosomes. This chain is Ribosome maturation factor RimM, found in Streptococcus gordonii (strain Challis / ATCC 35105 / BCRC 15272 / CH1 / DL1 / V288).